Consider the following 258-residue polypeptide: L-2,3-butanediol dehydrogenase (258 aa).

NAD(+) contacts are provided by residues 12-14, Asp-33, Gln-37, 61-62, Asn-88, Tyr-154, Lys-158, and 184-189; these read QGI, DV, and PGIVGT. Tyr-154 acts as the Proton acceptor in catalysis.

The protein belongs to the short-chain dehydrogenases/reductases (SDR) family. In terms of assembly, homotetramer.

The enzyme catalyses (S,S)-butane-2,3-diol + NAD(+) = (S)-acetoin + NADH + H(+). It carries out the reaction (S)-acetoin + NAD(+) = diacetyl + NADH + H(+). Slightly activated by Ba(2+), Ca(2+), Mn(2+), Mg(2+), and Co(2+), while Hg(2+) and Cu(2+) cause marked inhibition of the activity. Ni(2+), Zn(2+) and Cd(2+) have no effect on the catalytic activity. Is also slightly inhibited by lactate, pyruvate, succinate, acetate and formate. Functionally, catalyzes the reversible reduction of (S)-acetoin to (S,S)-butane-2,3-diol (L-BD) in the presence of NADH. To a lesser extent, can also catalyze the irreversible reduction of diacetyl to (S)-acetoin. Cannot oxidize meso-BD, D-BD, 2-butanol, 1,2-propanediol, ethanol, acetol, 1,2-butanediol, 1,3-butanediol, n-butanol, and n-propanol. Cannot reduce (R)-acetoin, acetol, dihydroxyacetone and 2,4-pentanedione. This Corynebacterium glutamicum (Brevibacterium saccharolyticum) protein is L-2,3-butanediol dehydrogenase.